The sequence spans 810 residues: Sister chromatid cohesion 1 protein 2 (810 aa).

Disordered regions lie at residues 200–244 (RDTT…LLEP), 273–315 (SHES…SECG), and 606–626 (MGAS…AETP). Composition is skewed to basic and acidic residues over residues 220–234 (EPSR…HRED) and 273–310 (SHES…DRSL). Residues 606–622 (MGASSTTSGTAHQTENA) are compositionally biased toward polar residues.

It belongs to the rad21 family. As to quaternary structure, component of the cohesin complex. In terms of tissue distribution, low expression in shoots, buds, siliques, leaves and roots. Found in, but not limited to, actively dividing cells: in procambium, protoderm and ground meristem in roots, and in shoot and floral meristems.

Its subcellular location is the nucleus. Functionally, may be involved in sister chromatid cohesion during mitosis. The protein is Sister chromatid cohesion 1 protein 2 (SYN2) of Arabidopsis thaliana (Mouse-ear cress).